Reading from the N-terminus, the 56-residue chain is uncharacterized protein (56 aa).

This is an uncharacterized protein from Borreliella burgdorferi (strain ATCC 35210 / DSM 4680 / CIP 102532 / B31) (Borrelia burgdorferi).